Here is a 534-residue protein sequence, read N- to C-terminus: Apolipoprotein N-acyltransferase (534 aa).

Transmembrane regions (helical) follow at residues 18-38 (LLAI…GFFA), 39-59 (AMFL…ASPD), 74-94 (WLFG…ALLV), 105-125 (LAIL…VALA), 127-147 (IFWS…GLME), 178-198 (VIGA…PALA), and 209-229 (ALAV…LYVA). Residues 246–496 (VQPDIDQAAK…TGFIDATVDR (251 aa)) form the CN hydrolase domain. Glu291 acts as the Proton acceptor in catalysis. The active site involves Lys355. Cys408 serves as the catalytic Nucleophile. The helical transmembrane segment at 504–524 (TFPRQTYFWLTEALLILIALV) threads the bilayer.

This sequence belongs to the CN hydrolase family. Apolipoprotein N-acyltransferase subfamily.

It localises to the cell inner membrane. It catalyses the reaction N-terminal S-1,2-diacyl-sn-glyceryl-L-cysteinyl-[lipoprotein] + a glycerophospholipid = N-acyl-S-1,2-diacyl-sn-glyceryl-L-cysteinyl-[lipoprotein] + a 2-acyl-sn-glycero-3-phospholipid + H(+). The protein operates within protein modification; lipoprotein biosynthesis (N-acyl transfer). In terms of biological role, catalyzes the phospholipid dependent N-acylation of the N-terminal cysteine of apolipoprotein, the last step in lipoprotein maturation. This Rhizobium leguminosarum bv. trifolii (strain WSM2304) protein is Apolipoprotein N-acyltransferase.